The chain runs to 65 residues: Small, acid-soluble spore protein H 3 (65 aa).

It belongs to the SspH family.

The protein resides in the spore core. This chain is Small, acid-soluble spore protein H 3, found in Geobacillus thermodenitrificans (strain NG80-2).